Here is a 404-residue protein sequence, read N- to C-terminus: Deoxyguanosinetriphosphate triphosphohydrolase-like protein (404 aa).

The tract at residues 1 to 32 (MAVGMAAPHATYASDPARSRGRLFDEPPSKTR) is disordered. The segment covering 22–32 (RLFDEPPSKTR) has biased composition (basic and acidic residues). The HD domain maps to 69 to 217 (RLTHTLEVAQ…AAIADDIAYD (149 aa)).

Belongs to the dGTPase family. Type 2 subfamily.

The protein is Deoxyguanosinetriphosphate triphosphohydrolase-like protein of Nitrobacter hamburgensis (strain DSM 10229 / NCIMB 13809 / X14).